We begin with the raw amino-acid sequence, 118 residues long: Large ribosomal subunit protein uL24 (118 aa).

Belongs to the universal ribosomal protein uL24 family. Part of the 50S ribosomal subunit.

In terms of biological role, one of two assembly initiator proteins, it binds directly to the 5'-end of the 23S rRNA, where it nucleates assembly of the 50S subunit. Functionally, one of the proteins that surrounds the polypeptide exit tunnel on the outside of the subunit. This Parasynechococcus marenigrum (strain WH8102) protein is Large ribosomal subunit protein uL24.